We begin with the raw amino-acid sequence, 573 residues long: DNA ligase (573 aa).

Position 248 (glutamate 248) interacts with ATP. The active-site N6-AMP-lysine intermediate is lysine 250. Residues arginine 255, arginine 270, glutamate 299, phenylalanine 340, arginine 432, and lysine 438 each contribute to the ATP site.

This sequence belongs to the ATP-dependent DNA ligase family. Mg(2+) serves as cofactor.

The catalysed reaction is ATP + (deoxyribonucleotide)n-3'-hydroxyl + 5'-phospho-(deoxyribonucleotide)m = (deoxyribonucleotide)n+m + AMP + diphosphate.. Functionally, DNA ligase that seals nicks in double-stranded DNA during DNA replication, DNA recombination and DNA repair. The chain is DNA ligase from Methanocaldococcus jannaschii (strain ATCC 43067 / DSM 2661 / JAL-1 / JCM 10045 / NBRC 100440) (Methanococcus jannaschii).